A 324-amino-acid polypeptide reads, in one-letter code: Ribose 1,5-bisphosphate isomerase (324 aa).

Residues 22–25 (RGAG) and Arg65 contribute to the substrate site. Cys135 acts as the Proton acceptor in catalysis. 137–139 (SKA) is a binding site for substrate. Asp204 serves as the catalytic Proton donor. Lys240 is a substrate binding site.

This sequence belongs to the eIF-2B alpha/beta/delta subunits family. R15P isomerase subfamily.

It catalyses the reaction alpha-D-ribose 1,5-bisphosphate = D-ribulose 1,5-bisphosphate. Catalyzes the isomerization of ribose 1,5-bisphosphate (R15P) to ribulose 1,5-bisphosphate (RuBP), the CO(2) acceptor and substrate for RubisCO. Functions in an archaeal AMP degradation pathway, together with AMP phosphorylase and RubisCO. This Pyrococcus furiosus (strain ATCC 43587 / DSM 3638 / JCM 8422 / Vc1) protein is Ribose 1,5-bisphosphate isomerase.